The following is a 176-amino-acid chain: ATP-dependent protease subunit HslV (176 aa).

Thr-2 is a catalytic residue. Gly-157, Cys-160, and Thr-163 together coordinate Na(+).

It belongs to the peptidase T1B family. HslV subfamily. As to quaternary structure, a double ring-shaped homohexamer of HslV is capped on each side by a ring-shaped HslU homohexamer. The assembly of the HslU/HslV complex is dependent on binding of ATP.

Its subcellular location is the cytoplasm. The catalysed reaction is ATP-dependent cleavage of peptide bonds with broad specificity.. Allosterically activated by HslU binding. Functionally, protease subunit of a proteasome-like degradation complex believed to be a general protein degrading machinery. In Salmonella agona (strain SL483), this protein is ATP-dependent protease subunit HslV.